The following is a 361-amino-acid chain: Chorismate synthase (361 aa).

Residues R48 and R54 each coordinate NADP(+). Residues 125–127 (RSS), 238–239 (NA), G278, 293–297 (KPTSS), and R319 each bind FMN.

The protein belongs to the chorismate synthase family. In terms of assembly, homotetramer. It depends on FMNH2 as a cofactor.

It catalyses the reaction 5-O-(1-carboxyvinyl)-3-phosphoshikimate = chorismate + phosphate. The protein operates within metabolic intermediate biosynthesis; chorismate biosynthesis; chorismate from D-erythrose 4-phosphate and phosphoenolpyruvate: step 7/7. Its function is as follows. Catalyzes the anti-1,4-elimination of the C-3 phosphate and the C-6 proR hydrogen from 5-enolpyruvylshikimate-3-phosphate (EPSP) to yield chorismate, which is the branch point compound that serves as the starting substrate for the three terminal pathways of aromatic amino acid biosynthesis. This reaction introduces a second double bond into the aromatic ring system. This Yersinia pseudotuberculosis serotype IB (strain PB1/+) protein is Chorismate synthase.